Here is a 275-residue protein sequence, read N- to C-terminus: NH(3)-dependent NAD(+) synthetase (275 aa).

Residue 46-53 (GISGGQDS) participates in ATP binding. D52 serves as a coordination point for Mg(2+). R140 provides a ligand contact to deamido-NAD(+). Residue T160 coordinates ATP. E165 serves as a coordination point for Mg(2+). The deamido-NAD(+) site is built by K173 and D180. ATP contacts are provided by K189 and T211. A deamido-NAD(+)-binding site is contributed by 260-261 (HK).

The protein belongs to the NAD synthetase family. As to quaternary structure, homodimer.

The enzyme catalyses deamido-NAD(+) + NH4(+) + ATP = AMP + diphosphate + NAD(+) + H(+). It functions in the pathway cofactor biosynthesis; NAD(+) biosynthesis; NAD(+) from deamido-NAD(+) (ammonia route): step 1/1. Catalyzes the ATP-dependent amidation of deamido-NAD to form NAD. Uses ammonia as a nitrogen source. This chain is NH(3)-dependent NAD(+) synthetase, found in Escherichia coli O157:H7.